A 590-amino-acid polypeptide reads, in one-letter code: Aspartate--tRNA(Asp/Asn) ligase (590 aa).

An L-aspartate-binding site is contributed by Glu-182. The tract at residues 206 to 209 is aspartate; sequence QLFK. Arg-228 lines the L-aspartate pocket. Residues 228-230 and Gln-237 contribute to the ATP site; that span reads RDE. His-454 is an L-aspartate binding site. Glu-488 provides a ligand contact to ATP. Arg-495 is an L-aspartate binding site. 540–543 serves as a coordination point for ATP; that stretch reads GLDR.

This sequence belongs to the class-II aminoacyl-tRNA synthetase family. Type 1 subfamily. In terms of assembly, homodimer.

It is found in the cytoplasm. The enzyme catalyses tRNA(Asx) + L-aspartate + ATP = L-aspartyl-tRNA(Asx) + AMP + diphosphate. In terms of biological role, aspartyl-tRNA synthetase with relaxed tRNA specificity since it is able to aspartylate not only its cognate tRNA(Asp) but also tRNA(Asn). Reaction proceeds in two steps: L-aspartate is first activated by ATP to form Asp-AMP and then transferred to the acceptor end of tRNA(Asp/Asn). This Halothermothrix orenii (strain H 168 / OCM 544 / DSM 9562) protein is Aspartate--tRNA(Asp/Asn) ligase.